Reading from the N-terminus, the 878-residue chain is Alanine--tRNA ligase (878 aa).

Zn(2+) contacts are provided by histidine 566, histidine 570, cysteine 668, and histidine 672. The segment at 846–866 (GGGRPDMAQAGGKQPEKLEEA) is disordered.

The protein belongs to the class-II aminoacyl-tRNA synthetase family. Requires Zn(2+) as cofactor.

It localises to the cytoplasm. The enzyme catalyses tRNA(Ala) + L-alanine + ATP = L-alanyl-tRNA(Ala) + AMP + diphosphate. Catalyzes the attachment of alanine to tRNA(Ala) in a two-step reaction: alanine is first activated by ATP to form Ala-AMP and then transferred to the acceptor end of tRNA(Ala). Also edits incorrectly charged Ser-tRNA(Ala) and Gly-tRNA(Ala) via its editing domain. In Bacillus pumilus (strain SAFR-032), this protein is Alanine--tRNA ligase.